Reading from the N-terminus, the 144-residue chain is HTH-type transcriptional regulator LrpC (144 aa).

An HTH asnC-type domain is found at 3 to 64 (LDQIDLNIIE…EVDQKKLGLP (62 aa)). The segment at residues 22–41 (MRELGRKIKLSPPSVTERVR) is a DNA-binding region (H-T-H motif).

Transcriptional regulator with a possible role in regulation of amino acid metabolism. Plays a role in the growth phase transition. The protein is HTH-type transcriptional regulator LrpC (lrpC) of Bacillus subtilis (strain 168).